Here is a 368-residue protein sequence, read N- to C-terminus: Aspartate-semialdehyde dehydrogenase (368 aa).

Residues 10 to 13 (RGMV), 37 to 38 (TS), and Gln-72 contribute to the NADP(+) site. Residue Arg-101 coordinates phosphate. Catalysis depends on Cys-134, which acts as the Acyl-thioester intermediate. Residues 160 to 161 (SG) and Pro-191 each bind NADP(+). Glu-239 lines the substrate pocket. Phosphate is bound at residue Lys-242. Arg-266 is a binding site for substrate. Catalysis depends on His-273, which acts as the Proton acceptor. Gln-349 serves as a coordination point for NADP(+).

It belongs to the aspartate-semialdehyde dehydrogenase family. In terms of assembly, homodimer.

The catalysed reaction is L-aspartate 4-semialdehyde + phosphate + NADP(+) = 4-phospho-L-aspartate + NADPH + H(+). Its pathway is amino-acid biosynthesis; L-lysine biosynthesis via DAP pathway; (S)-tetrahydrodipicolinate from L-aspartate: step 2/4. The protein operates within amino-acid biosynthesis; L-methionine biosynthesis via de novo pathway; L-homoserine from L-aspartate: step 2/3. It functions in the pathway amino-acid biosynthesis; L-threonine biosynthesis; L-threonine from L-aspartate: step 2/5. Its function is as follows. Catalyzes the NADPH-dependent formation of L-aspartate-semialdehyde (L-ASA) by the reductive dephosphorylation of L-aspartyl-4-phosphate. This chain is Aspartate-semialdehyde dehydrogenase, found in Azotobacter vinelandii.